We begin with the raw amino-acid sequence, 185 residues long: UPF0301 protein HCH_00550 (185 aa).

This sequence belongs to the UPF0301 (AlgH) family.

This chain is UPF0301 protein HCH_00550, found in Hahella chejuensis (strain KCTC 2396).